The following is a 459-amino-acid chain: uncharacterized protein (459 aa).

Transmembrane regions (helical) follow at residues 53-75 (IPLLPVLALSVGALTVLGQGLTL) and 111-133 (ARIARVLLLVAGVFTLVIVCLCA). The segment at 174–196 (HLDNPSAPHPSENPQSRAHPKQN) is disordered.

The protein localises to the cell membrane. This is an uncharacterized protein from Treponema pallidum (strain Nichols).